An 85-amino-acid chain; its full sequence is MKMTLIAILTCAAVLVLHTTAAEELEAESQLMEVGMPDTELEAVDEERLFECSVSCEIEKEGNKDCKKKKCKGGWKCKFNMCVKV.

Positions 1 to 22 (MKMTLIAILTCAAVLVLHTTAA) are cleaved as a signal peptide. The propeptide occupies 23–48 (EELEAESQLMEVGMPDTELEAVDEER). 3 disulfide bridges follow: Cys52–Cys66, Cys56–Cys77, and Cys71–Cys82.

This sequence belongs to the neurotoxin 12 (Hwtx-2) family. 02 (Hwtx-2) subfamily. Monomer. Expressed by the venom gland.

It is found in the secreted. In terms of biological role, neurotoxin active on both insects and mammals. The sequence is that of U4-theraphotoxin-Hhn1a from Cyriopagopus hainanus (Chinese bird spider).